A 76-amino-acid chain; its full sequence is UPF0291 protein BT9727_1737 (76 aa).

This sequence belongs to the UPF0291 family.

The protein localises to the cytoplasm. The polypeptide is UPF0291 protein BT9727_1737 (Bacillus thuringiensis subsp. konkukian (strain 97-27)).